The following is a 1049-amino-acid chain: Probable ATP-dependent permease (1049 aa).

The N-terminal stretch at 1–25 (MGSHRRYLYYSILSFLLLSCSVVLA) is a signal peptide. The Lumenal portion of the chain corresponds to 26–324 (KQDKTPFFEG…KDPTVSWQGK (299 aa)). N-linked (GlcNAc...) asparagine glycosylation is found at asparagine 50, asparagine 114, asparagine 165, and asparagine 221. The helical transmembrane segment at 325–345 (LVLALTAVMVLALFTFATFYI) threads the bilayer. Residues 346 to 463 (SKSPLFRNGL…ISMDRKSFSK (118 aa)) are Cytoplasmic-facing. The region spanning 384 to 631 (LSFENITYSV…LRNEGYICPD (248 aa)) is the ABC transporter domain. 423–430 (GGSGAGKT) is a binding site for ATP. A helical transmembrane segment spans residues 464–481 (IIGFVDQDDFLLPTLTVF). Residues 482 to 793 (ETVLNSALLR…SFKNMYRNPK (312 aa)) are Lumenal-facing. Phosphoserine is present on residues serine 659 and serine 702. One can recognise an ABC transmembrane type-2 domain in the interval 793–1044 (KLLLGNYLLT…IMGYLALKWI (252 aa)). A helical transmembrane segment spans residues 794-814 (LLLGNYLLTILLSLFLGTLYY). Residues 815–828 (NVSNDISGFQNRMG) lie on the Cytoplasmic side of the membrane. The chain crosses the membrane as a helical span at residues 829–849 (LFFFILTYFGFVTFTGLSSFA). Residues 850–877 (LERIIFIKERSNNYYSPLAYYISKIMSE) are Lumenal-facing. Residues 878–898 (VVPLRVVPPILLSLIVYPMTG) form a helical membrane-spanning segment. The Cytoplasmic segment spans residues 899 to 909 (LNMKDNAFFKC). The chain crosses the membrane as a helical span at residues 910–930 (IGILILFNLGISLEILTIGII). Over 931-937 (FEDLNNS) the chain is Lumenal. The N-linked (GlcNAc...) asparagine glycan is linked to asparagine 935. The helical transmembrane segment at 938-958 (IILSVLVLLGSLLFSGLFINT) threads the bilayer. At 959–1000 (KNITNVAFKYLKNFSVFYYAYESLLINEVKTLMLKERKYGLN) the chain is on the cytoplasmic side. The helical transmembrane segment at 1001–1021 (IEVPGATILSTFGFVVQNLVF) threads the bilayer. Residues 1022–1024 (DIK) lie on the Lumenal side of the membrane. The helical transmembrane segment at 1025–1045 (ILALFNVVFLIMGYLALKWIV) threads the bilayer. Residues 1046 to 1049 (VEQK) lie on the Cytoplasmic side of the membrane.

The protein belongs to the ABC transporter superfamily. ABCG family. Eye pigment precursor importer (TC 3.A.1.204) subfamily.

The protein localises to the endoplasmic reticulum membrane. The chain is Probable ATP-dependent permease (ADP1) from Saccharomyces cerevisiae (strain ATCC 204508 / S288c) (Baker's yeast).